Here is a 365-residue protein sequence, read N- to C-terminus: tRNA dimethylallyltransferase (365 aa).

ATP is bound at residue 23–30 (APTASGKT). 25 to 30 (TASGKT) is a binding site for substrate. Interaction with substrate tRNA stretches follow at residues 48 to 51 (DSAL), 172 to 176 (QRITR), and 256 to 261 (RCVGYR).

Belongs to the IPP transferase family. Monomer. Requires Mg(2+) as cofactor.

The enzyme catalyses adenosine(37) in tRNA + dimethylallyl diphosphate = N(6)-dimethylallyladenosine(37) in tRNA + diphosphate. Functionally, catalyzes the transfer of a dimethylallyl group onto the adenine at position 37 in tRNAs that read codons beginning with uridine, leading to the formation of N6-(dimethylallyl)adenosine (i(6)A). In Psychrobacter sp. (strain PRwf-1), this protein is tRNA dimethylallyltransferase.